A 476-amino-acid polypeptide reads, in one-letter code: Serine/threonine-protein kinase WAG1 (476 aa).

A Protein kinase domain is found at 93 to 400 (FKLVRHLGTG…AQDIKRHEFF (308 aa)). ATP contacts are provided by residues 99–107 (LGTGNLGRV) and K124. D219 serves as the catalytic Proton acceptor.

Belongs to the protein kinase superfamily. Ser/Thr protein kinase family. As to expression, expressed in root tips and lateral root primordia.

It localises to the cytoplasm. Its subcellular location is the cytosol. It carries out the reaction L-seryl-[protein] + ATP = O-phospho-L-seryl-[protein] + ADP + H(+). The enzyme catalyses L-threonyl-[protein] + ATP = O-phospho-L-threonyl-[protein] + ADP + H(+). In terms of biological role, serine/threonine-protein kinase involved in the regulation of auxin signaling. Acts as a positive regulator of cellular auxin efflux and regulates organ development by enhancing PIN-mediated polar auxin transport. Phosphorylates conserved serine residues in the PIN auxin efflux carriers. Phosphorylation of PIN proteins is required and sufficient for apical-basal PIN polarity that enables directional intercellular auxin fluxes, which mediate differential growth, tissue patterning and organogenesis. Acts as a suppressor of root waving. This chain is Serine/threonine-protein kinase WAG1 (WAG1), found in Arabidopsis thaliana (Mouse-ear cress).